The sequence spans 139 residues: Flagellar basal body rod protein FlgB (139 aa).

It belongs to the flagella basal body rod proteins family. In terms of assembly, the basal body constitutes a major portion of the flagellar organelle and consists of a number of rings mounted on a central rod. In Gram-negative bacteria, at least four rings, L, P, S and M are present, whereas Gram-positive bacteria lack the L and P rings. The rod consists of about 26 subunits of FlgG in the distal portion, and FlgB, FlgC and FlgF build up the proximal portion of the rod with about 6 subunits each. Rod assembly occurs by export via the flagellum-specific pathway of its constituent proteins and by their incorporation into the rod structure in the probable order of FlgB, FlgC, FlgF and FlgG. Another protein, FliE, also assembles onto the stable rod structure.

The protein resides in the bacterial flagellum basal body. Functionally, structural component of flagellum, the bacterial motility apparatus. Part of the rod structure of flagellar basal body. This is Flagellar basal body rod protein FlgB from Proteus mirabilis.